We begin with the raw amino-acid sequence, 277 residues long: Myelin proteolipid protein (277 aa).

Residues 2-10 (GLLECCARC) lie on the Cytoplasmic side of the membrane. 3 S-palmitoyl cysteine lipidation sites follow: cysteine 6, cysteine 7, and cysteine 10. A helical membrane pass occupies residues 11–36 (LIGAPFASLVATGLCFFGVALFCGCG). At 37-59 (HEALTGTEQLIETYFSKNYQDYE) the chain is on the extracellular side. Residues 60-88 (FLIDVIHGFQYFIYGTAAFFFLYGALLLA) form a helical membrane-spanning segment. Residues 89-151 (EGFYTTGAVR…LGKWLGHPDK (63 aa)) are Cytoplasmic-facing. S-palmitoyl cysteine attachment occurs at residues cysteine 109, cysteine 139, and cysteine 141. The helical transmembrane segment at 152 to 178 (FVGITYVLTIIWLLVFACSAVPVYIYF) threads the bilayer. Topologically, residues 179–238 (NTWTTCQSIGNPTKTSASIGTLCADARMYGILPWNAFPGKVCGSNLLSICKTSEFQMTFH) are extracellular. 2 disulfides stabilise this stretch: cysteine 184–cysteine 228 and cysteine 201–cysteine 220. Residue threonine 199 is the site of O-palmitoyl threonine attachment. Residues 239-268 (LFIAAFVGAAATLVSLVTFIIATTYNFAVL) traverse the membrane as a helical segment. Over 269–277 (RLMGRGTKF) the chain is Cytoplasmic.

This sequence belongs to the myelin proteolipid protein family.

Its subcellular location is the cell membrane. In terms of biological role, this is the major myelin protein from the central nervous system. It plays an important role in the formation or maintenance of the multilamellar structure of myelin. This is Myelin proteolipid protein (PLP1) from Taeniopygia guttata (Zebra finch).